We begin with the raw amino-acid sequence, 406 residues long: MMTDTVDDVDLPYDKDSASQQEKITALQERLEVLETQNEEMRDKLLDTNAENNKYQQKLERLTHENKKLKQSPLFVATVQEITDEGVIIKQHGNNQEALTEVTDEMREELEPDARVAVNNSLSIVKRLDKETDVRARVMQVEHSPDVTYEDIGGLEEQMQEVRETVEMPLDRPEMFAEVGIDPPSGVLLYGPPGTGKTMLAKAVANQTNASFIKMAGSELVHKFIGEGAKLVRDLFEVARENEPAVIFIDEIDAIASKRTDSKTSGDAEVQRTMMQLLAEMDGFDERGNIRIIAATNRFDMLDPAILRPGRFDRLIEVPKPNEDGREIIFQIHTRKMNVSDDVDFVELAEMADNASGADIKAVCTEAGMFAIRDDRTEIFMQDFVDAWEKIQQEASDETEVSRAFA.

A coiled-coil region spans residues 13 to 72 (YDKDSASQQEKITALQERLEVLETQNEEMRDKLLDTNAENNKYQQKLERLTHENKKLKQS). ATP-binding positions include 194-199 (GTGKTM) and His333. A docks into pockets in the proteasome alpha-ring to cause gate opening region spans residues 404-406 (AFA).

It belongs to the AAA ATPase family. As to quaternary structure, homododecamer, in a proposed two stacked hexameric ring configuration, but may also form homohexamer. The hexameric complex has likely a two-ring architecture resembling a top hat that caps the 20S proteasome core at one or both ends. Upon ATP-binding, the C-terminus of PAN probably interacts with the alpha-rings of the proteasome core by binding to the intersubunit pockets. Interacts with SAMP1-MoaE conjugate in vitro, but does not bind to SAMP1 or MoaE alone. Interacts with NcsA.

The protein resides in the cytoplasm. Its activity is regulated as follows. ATPase activity is inhibited by EDTA in vitro. Its function is as follows. ATPase which is responsible for recognizing, binding, unfolding and translocation of substrate proteins into the archaeal 20S proteasome core particle. Is essential for opening the gate of the 20S proteasome via an interaction with its C-terminus, thereby allowing substrate entry and access to the site of proteolysis. Thus, the C-terminus of the proteasomal ATPase functions like a 'key in a lock' to induce gate opening and therefore regulate proteolysis. Unfolding activity requires energy from ATP hydrolysis, whereas ATP binding alone promotes ATPase-20S proteasome association which triggers gate opening, and supports translocation of unfolded substrates. Is also able to cleave other nucleoside triphosphates including GTP and TTP, but the rate of hydrolysis is 4- to 5-fold slower than for ATP. This chain is Proteasome-activating nucleotidase 1, found in Haloferax volcanii (strain ATCC 29605 / DSM 3757 / JCM 8879 / NBRC 14742 / NCIMB 2012 / VKM B-1768 / DS2) (Halobacterium volcanii).